The chain runs to 129 residues: M-zodatoxin-Lt8h (129 aa).

An N-terminal signal peptide occupies residues 1–20 (MKYFVVALALVAAFACIAES). The propeptide occupies 21-60 (KPAESEHELAEVEEENELADLEDAVWLEDLADLSDLEETR).

It belongs to the cationic peptide 06 (cytoinsectotoxin) family. As to expression, expressed by the venom gland.

The protein resides in the secreted. Functionally, insecticidal, cytolytic and antimicrobial peptide. Has insecticidal activity against the flesh fly S.carnaria. Has antibacterial activity against the Gram-negative bacteria E.coli. Forms voltage-dependent, ion-permeable channels in membranes. At high concentration causes cell membrane lysis. The protein is M-zodatoxin-Lt8h (cit 1-11) of Lachesana tarabaevi (Spider).